We begin with the raw amino-acid sequence, 134 residues long: Cytochrome b5 (134 aa).

Positions 6 to 82 (VKYFTRAEVA…MKQYKVGELV (77 aa)) constitute a Cytochrome b5 heme-binding domain. Histidine 41 and histidine 65 together coordinate heme. The chain crosses the membrane as a helical span at residues 111–131 (WLMPFVLGLVATLIYKFFFGT).

It belongs to the cytochrome b5 family.

The protein resides in the endoplasmic reticulum membrane. The protein localises to the microsome membrane. Functionally, cytochrome b5 is a membrane bound hemoprotein which function as an electron carrier for several membrane bound oxygenases. The polypeptide is Cytochrome b5 (Cyt-b5) (Musca domestica (House fly)).